The sequence spans 395 residues: MTMLKTKADPMIVSMGPHHPSMHGVLRLIVTLDGENVIDCEPILGYLHRGMEKIAENRTTLQYLPYVTRWDYLATMFTEAVTVNAPERLANIQVPKRASYIRVIMLELSRLASHLLWLGPFMADIGAQTPFFYIFREREMIYDLFESATGMRMMHNYFRIGGVAVDLPYGWVDKCLDFCDYFLPKIDEYERLITRNPIFLKRVEGVGFIGREEAINWGLSGPMLRASGVQWDLRKVDHYECYDEFDWQVEWQTEGDCLARYLVRIGEMRESTKIIQQALKSIPGGPYENLEARRIGLIGTDSAQWNDFEYQFISKKPSPTFKLPKQEHYVRVEAPKGELGIYLIGDDSIFPWRWKIRPPGFINLQILPQLLRGVKLADIMTILGSIDIIMGEVDR.

It belongs to the complex I 49 kDa subunit family. NDH is composed of at least 16 different subunits, 5 of which are encoded in the nucleus.

The protein resides in the plastid. Its subcellular location is the chloroplast thylakoid membrane. It carries out the reaction a plastoquinone + NADH + (n+1) H(+)(in) = a plastoquinol + NAD(+) + n H(+)(out). The catalysed reaction is a plastoquinone + NADPH + (n+1) H(+)(in) = a plastoquinol + NADP(+) + n H(+)(out). Its function is as follows. NDH shuttles electrons from NAD(P)H:plastoquinone, via FMN and iron-sulfur (Fe-S) centers, to quinones in the photosynthetic chain and possibly in a chloroplast respiratory chain. The immediate electron acceptor for the enzyme in this species is believed to be plastoquinone. Couples the redox reaction to proton translocation, and thus conserves the redox energy in a proton gradient. This is NAD(P)H-quinone oxidoreductase subunit H, chloroplastic from Staurastrum punctulatum (Green alga).